We begin with the raw amino-acid sequence, 424 residues long: Arogenate dehydratase 1 (424 aa).

The N-terminal 52 residues, 1 to 52 (MQSLTPSSGVNLKSIIRKTSLPPGQTRFITGRVIKCGYQVDSANTVNTAGAP), are a transit peptide targeting the chloroplast. Residues 131–308 (RVAYQGVPGA…NVTRFVMLAR (178 aa)) enclose the Prephenate dehydratase domain. One can recognise an ACT domain in the interval 321–412 (TSIVFAHEGT…SFLRVLGSYP (92 aa)).

In terms of tissue distribution, mostly expressed in flowers, especially in petals (corollas and tubes), and, at low levels, in roots, stems, leaves, pistils, stamens, ovaries and sepals.

It localises to the plastid. It is found in the chloroplast stroma. It catalyses the reaction L-arogenate + H(+) = L-phenylalanine + CO2 + H2O. The protein operates within amino-acid biosynthesis; L-phenylalanine biosynthesis; L-phenylalanine from L-arogenate: step 1/1. Functionally, converts L-arogenate produced from the shikimate-chorismate pathway into phenylalanine (Phe). Involved in floral volatile benzenoids and phenylpropanoids (FVBP) production. In Petunia hybrida (Petunia), this protein is Arogenate dehydratase 1.